The following is a 739-amino-acid chain: Putative apoptosis-inducing factor 1, mitochondrial (739 aa).

A mitochondrion-targeting transit peptide spans Met1–Pro42. The interval Tyr257–Asp564 is FAD-dependent oxidoreductase. FAD-binding positions include Gly261 to Ala265, Arg295, Lys300, Val358, Arg410, Asp564, and His580 to His581. The interval Val644–Pro681 is disordered. Residues Pro656–Gly676 show a composition bias toward low complexity.

This sequence belongs to the FAD-dependent oxidoreductase family. It depends on FAD as a cofactor.

It localises to the mitochondrion intermembrane space. The enzyme catalyses A + NADH + H(+) = AH2 + NAD(+). Its function is as follows. Probable NADH oxidoreductase. Mitochondrial effector of cell death that plays roles in developmentally regulated cell death and normal mitochondrial function. In Drosophila melanogaster (Fruit fly), this protein is Putative apoptosis-inducing factor 1, mitochondrial (AIF).